Consider the following 310-residue polypeptide: Ribosomal RNA small subunit methyltransferase H (310 aa).

Residues 33 to 35 (AGH), Asp53, Phe79, Asp100, and Gln107 contribute to the S-adenosyl-L-methionine site.

It belongs to the methyltransferase superfamily. RsmH family.

It localises to the cytoplasm. It catalyses the reaction cytidine(1402) in 16S rRNA + S-adenosyl-L-methionine = N(4)-methylcytidine(1402) in 16S rRNA + S-adenosyl-L-homocysteine + H(+). In terms of biological role, specifically methylates the N4 position of cytidine in position 1402 (C1402) of 16S rRNA. The chain is Ribosomal RNA small subunit methyltransferase H from Clostridium botulinum (strain Alaska E43 / Type E3).